Here is a 657-residue protein sequence, read N- to C-terminus: Transcription factor 12 (657 aa).

Positions 1 to 20 are enriched in polar residues; it reads MDEKGGTTSWGTSGQPSPSY. 5 disordered regions span residues 1 to 76, 89 to 285, 297 to 340, 459 to 555, and 628 to 657; these read MDEK…SGLS, LGSP…QTGD, PDHT…YENS, VSAQ…ERRM, and KVSAVSAEPPTPHPGSHPGLSETTNPMGHM. Residues 30 to 43 show a composition bias toward basic and acidic residues; that stretch reads HYSDHLNDSRKGTH. 2 stretches are compositionally biased toward polar residues: residues 49–70 and 93–112; these read TPFSNSNLIGKTSGRGSFSLYS and AQLSSSGKPETPYYSFSATS. Positions 68–89 are leucine-zipper; it reads LYSRDSGLSGCQSSLLRQELGL. A Nuclear localization signal motif is present at residues 130–136; sequence KKVRKVP. 3 stretches are compositionally biased toward polar residues: residues 168–193, 202–216, and 230–254; these read MFASTFFMQDGTHSSSDLWSSSNGMS, GTSTSHMSQSGSYGS, and VSPTDINTSLPPMSSFHRGSTSSSP. Residues 300 to 311 show a composition bias toward low complexity; it reads TSSSFPSNPSTP. Polar residues predominate over residues 312-340; that stretch reads VGSPSPLTGASQWSRSGGQAPSSPNYENS. Basic and acidic residues-rich tracts occupy residues 493 to 505, 511 to 526, and 543 to 555; these read IKSEHKEKDENIH, DDMKSDDESSQKDIKV, and PEQKIEREKERRM. Residues 552–605 form the bHLH domain; that stretch reads ERRMANNARERLRVRDINEAFKELGRMCQLHLKSEKPQTKLLILHQAVAVILSL. The interval 607–630 is class A specific domain; it reads QQVRERNLNPKAACLKRREEEKVS. The span at 648–657 shows a compositional bias: polar residues; it reads SETTNPMGHM.

As to quaternary structure, efficient DNA binding requires dimerization with another bHLH protein. Forms homo- or heterooligomers with myogenin, E12 and ITF2 proteins.

The protein localises to the nucleus. Its function is as follows. Transcriptional regulator. Involved in the initiation of neuronal differentiation. Activates transcription by binding to the E box-containing promoter. The protein is Transcription factor 12 (TCF12) of Gallus gallus (Chicken).